An 809-amino-acid chain; its full sequence is Pentatricopeptide repeat-containing protein At1g11290, chloroplastic (809 aa).

The N-terminal 46 residues, 1–46, are a transit peptide targeting the chloroplast; it reads MSSQLVQFSTVPQIPNPPSRHRHFLSERNYIPANVYEHPAALLLER. PPR repeat units lie at residues 68–98, 99–133, 134–168, 169–199, 200–234, 235–269, 270–300, 301–335, 336–370, 371–401, 402–436, 437–471, 472–502, 503–537, 538–568, and 574–604; these read EHFF…IDSK, LNVL…DVEP, VVYN…GFSL, DLFA…MPER, DLVS…NLKP, SFIT…GFDS, LVNI…MLER, NVVS…GVKP, TDVS…GLDR, NVSV…LQSR, TLVS…TVKP, DTFT…CLDK, NVFV…MSER, HVTT…TIKP, NGVT…MKEN, and SMDH…MPVK. The type E motif stretch occupies residues 609 to 684; it reads VYGAMLGACQ…TPGCSMVEIK (76 aa). The tract at residues 685–715 is type E(+) motif; the sequence is NEVHSFFSGSTAHPDSKKIYAFLEKLICHIK. The segment at 716 to 809 is type DYW motif; sequence EAGYVPDTNL…NGACSCGDYW (94 aa).

This sequence belongs to the PPR family. PCMP-H subfamily.

The protein localises to the plastid. It is found in the chloroplast. Involved in multiple sites RNA editing events in chloroplasts. Involved in the editing of the site 7 of ndhB (ndhB-7) and site 5 of ndhD (ndhD-5) transcripts, which are two plastid-encoded subunits of the chloroplast NAD(P)H dehydrogenase (NDH) complex. Involved in the editing of the site 3 of rpoB (rpoB-3) transcript. Required for the activity of the NDH complex of the photosynthetic electron transport chain. Possesses low endoribonuclease activity in vitro. The polypeptide is Pentatricopeptide repeat-containing protein At1g11290, chloroplastic (PCMP-H40) (Arabidopsis thaliana (Mouse-ear cress)).